The primary structure comprises 338 residues: Anthranilate phosphoribosyltransferase (338 aa).

Residues glycine 80, 83–84 (GD), threonine 88, 90–93 (NIST), 108–116 (KHGNRAVSS), and serine 120 contribute to the 5-phospho-alpha-D-ribose 1-diphosphate site. Glycine 80 is an anthranilate binding site. Residue serine 92 coordinates Mg(2+). Residue asparagine 111 participates in anthranilate binding. Arginine 166 lines the anthranilate pocket. Residues aspartate 225 and glutamate 226 each coordinate Mg(2+).

Belongs to the anthranilate phosphoribosyltransferase family. In terms of assembly, homodimer. The cofactor is Mg(2+).

It carries out the reaction N-(5-phospho-beta-D-ribosyl)anthranilate + diphosphate = 5-phospho-alpha-D-ribose 1-diphosphate + anthranilate. It functions in the pathway amino-acid biosynthesis; L-tryptophan biosynthesis; L-tryptophan from chorismate: step 2/5. Catalyzes the transfer of the phosphoribosyl group of 5-phosphorylribose-1-pyrophosphate (PRPP) to anthranilate to yield N-(5'-phosphoribosyl)-anthranilate (PRA). The chain is Anthranilate phosphoribosyltransferase from Thermoanaerobacter sp. (strain X514).